Reading from the N-terminus, the 293-residue chain is ATP synthase gamma chain (293 aa).

It belongs to the ATPase gamma chain family. As to quaternary structure, F-type ATPases have 2 components, CF(1) - the catalytic core - and CF(0) - the membrane proton channel. CF(1) has five subunits: alpha(3), beta(3), gamma(1), delta(1), epsilon(1). CF(0) has three main subunits: a, b and c.

It localises to the cell membrane. Functionally, produces ATP from ADP in the presence of a proton gradient across the membrane. The gamma chain is believed to be important in regulating ATPase activity and the flow of protons through the CF(0) complex. The protein is ATP synthase gamma chain of Streptococcus sanguinis.